Here is a 281-residue protein sequence, read N- to C-terminus: Very long chain fatty acid elongase 7 (281 aa).

An N-acetylalanine modification is found at Ala2. Residues 2–27 (AFSDLTSRTVRFYDNWIKDADPRVED) lie on the Lumenal side of the membrane. A helical transmembrane segment spans residues 28–48 (YLLMSSPLPQTIILGLYVYFV). At 49 to 72 (TSLGPKLMENRKPFELKKAMITYN) the chain is on the cytoplasmic side. A helical membrane pass occupies residues 73-93 (FFIVLFSVYMCYEFVMSGWGT). The Lumenal portion of the chain corresponds to 94–115 (GYSFRCDIVDYSQSPRAMRMVH). An intrachain disulfide couples Cys99 to Cys231. The helical transmembrane segment at 116 to 136 (TCWLYYFSKFIELLDTIFFVL) threads the bilayer. Lys124, Arg137, Lys139, Gln142, and His147 together coordinate 3-oxoeicosanoyl-CoA. Residues 137-142 (RKKNSQ) are Cytoplasmic-facing. The chain crosses the membrane as a helical span at residues 143–162 (VTFLHVFHHTIMPWTWWFGV). The HxxHH motif motif lies at 147-151 (HVFHH). The active-site Nucleophile is the His150. The Lumenal portion of the chain corresponds to 163–171 (KFAAGGLGT). A helical transmembrane segment spans residues 172-194 (FHAFLNTAVHVVMYSYYGLCAMG). Residues Tyr187, Lys204, Thr208, and Gln211 each coordinate 3-oxoeicosanoyl-CoA. Topologically, residues 195–206 (PAYQKYLWWKKH) are cytoplasmic. The chain crosses the membrane as a helical span at residues 207–227 (LTSLQLVQFVLVTIHIGQIFF). The Lumenal segment spans residues 228 to 236 (MEDCNYQYP). Residues 237–257 (VFLYIIMSYGCIFLLLFLHFW) traverse the membrane as a helical segment. Over 258-281 (YRAYTKGQRLPKTLENGNCKSKRH) the chain is Cytoplasmic. Arg266 lines the 3-oxoeicosanoyl-CoA pocket. Positions 277 to 281 (KSKRH) match the Di-lysine motif motif.

It belongs to the ELO family. ELOVL7 subfamily. Homodimer. Interacts with TECR.

It is found in the endoplasmic reticulum membrane. The catalysed reaction is a very-long-chain acyl-CoA + malonyl-CoA + H(+) = a very-long-chain 3-oxoacyl-CoA + CO2 + CoA. It carries out the reaction eicosanoyl-CoA + malonyl-CoA + H(+) = 3-oxodocosanoyl-CoA + CO2 + CoA. It catalyses the reaction (5Z,8Z,11Z,14Z)-eicosatetraenoyl-CoA + malonyl-CoA + H(+) = (7Z,10Z,13Z,16Z)-3-oxodocosatetraenoyl-CoA + CO2 + CoA. The enzyme catalyses (6Z,9Z,12Z)-octadecatrienoyl-CoA + malonyl-CoA + H(+) = (8Z,11Z,14Z)-3-oxoeicosatrienoyl-CoA + CO2 + CoA. The catalysed reaction is (9Z,12Z)-octadecadienoyl-CoA + malonyl-CoA + H(+) = (11Z,14Z)-3-oxoicosa-11,14-dienoyl-CoA + CO2 + CoA. It carries out the reaction (9Z)-octadecenoyl-CoA + malonyl-CoA + H(+) = 3-oxo-(11Z)-eicosenoyl-CoA + CO2 + CoA. It catalyses the reaction octadecanoyl-CoA + malonyl-CoA + H(+) = 3-oxoeicosanoyl-CoA + CO2 + CoA. The enzyme catalyses hexadecanoyl-CoA + malonyl-CoA + H(+) = 3-oxooctadecanoyl-CoA + CO2 + CoA. The catalysed reaction is (9Z,12Z,15Z)-octadecatrienoyl-CoA + malonyl-CoA + H(+) = (11Z,14Z,17Z)-3-oxoeicosatrienoyl-CoA + CO2 + CoA. The protein operates within lipid metabolism; fatty acid biosynthesis. Its function is as follows. Catalyzes the first and rate-limiting reaction of the four reactions that constitute the long-chain fatty acids elongation cycle. This endoplasmic reticulum-bound enzymatic process allows the addition of 2 carbons to the chain of long- and very long-chain fatty acids (VLCFAs) per cycle. Condensing enzyme with higher activity toward C18 acyl-CoAs, especially C18:3(n-3) acyl-CoAs and C18:3(n-6)-CoAs. Also active toward C20:4-, C18:0-, C18:1-, C18:2- and C16:0-CoAs, and weakly toward C20:0-CoA. Little or no activity toward C22:0-, C24:0-, or C26:0-CoAs. May participate in the production of saturated and polyunsaturated VLCFAs of different chain lengths that are involved in multiple biological processes as precursors of membrane lipids and lipid mediators. The sequence is that of Very long chain fatty acid elongase 7 from Mus musculus (Mouse).